A 379-amino-acid polypeptide reads, in one-letter code: UDP-4-amino-4-deoxy-L-arabinose--oxoglutarate aminotransferase (379 aa).

The residue at position 182 (Lys-182) is an N6-(pyridoxal phosphate)lysine.

It belongs to the DegT/DnrJ/EryC1 family. ArnB subfamily. In terms of assembly, homodimer. The cofactor is pyridoxal 5'-phosphate.

The enzyme catalyses UDP-4-amino-4-deoxy-beta-L-arabinose + 2-oxoglutarate = UDP-beta-L-threo-pentopyranos-4-ulose + L-glutamate. Its pathway is nucleotide-sugar biosynthesis; UDP-4-deoxy-4-formamido-beta-L-arabinose biosynthesis; UDP-4-deoxy-4-formamido-beta-L-arabinose from UDP-alpha-D-glucuronate: step 2/3. The protein operates within bacterial outer membrane biogenesis; lipopolysaccharide biosynthesis. Its function is as follows. Catalyzes the conversion of UDP-4-keto-arabinose (UDP-Ara4O) to UDP-4-amino-4-deoxy-L-arabinose (UDP-L-Ara4N). The modified arabinose is attached to lipid A and is required for resistance to polymyxin and cationic antimicrobial peptides. The sequence is that of UDP-4-amino-4-deoxy-L-arabinose--oxoglutarate aminotransferase from Escherichia coli (strain K12 / DH10B).